A 557-amino-acid polypeptide reads, in one-letter code: MRSDVIKKGYTRAPHRSLLRATGLKDEDFSKPFIGVANSFIEIIPGHFFLNKYAEILKDEIRKNGCVPFEFNTIGVDDGIAMGHGGMLYSLPSREIIANSIETVMNAHALDALVCMPNCDKIVPGMVMGALRVNVPTIFVSGGPMRKGYTKSGQPIDLATAFEAVGKFETKEISEEELKEIECNACPSGGSCSGMFTANSMNTLCEAMGIALSGNGTILALTKEREELIRRAGRRICEIALDERFKIRNILNEKAVRNALVVDMAMGGSSNTVLHMLAISREAGVNLQISQLNKISQNIAHIAKISPSLPNVHMEDIGRAGGMNAVIKEISRRDNGMLHLENLTVSGETLGERVGLSEIKDESVIHKVENAYSKVGGLAILFGNLAEQGCVIKTAGIVGERKFSGKAVCFNSQDEAIAGISSGKVGKGDVVVIRYEGPRGGPGMQEMLSPTSLIMGRGLGADVALITDGRFSGATRGLSIGHISPEAAEGGMIGLLRDGDIIDIDVDTYSINVRLSEAETLKRKAEFKPVQKELKGKWLRQYQRLVTNASNGAILEA.

Residue D78 coordinates Mg(2+). C119 contacts [2Fe-2S] cluster. Mg(2+)-binding residues include D120 and K121. The residue at position 121 (K121) is an N6-carboxylysine. C192 contacts [2Fe-2S] cluster. A Mg(2+)-binding site is contributed by E446. Catalysis depends on S472, which acts as the Proton acceptor.

Belongs to the IlvD/Edd family. Homodimer. It depends on [2Fe-2S] cluster as a cofactor. The cofactor is Mg(2+).

The enzyme catalyses (2R)-2,3-dihydroxy-3-methylbutanoate = 3-methyl-2-oxobutanoate + H2O. It carries out the reaction (2R,3R)-2,3-dihydroxy-3-methylpentanoate = (S)-3-methyl-2-oxopentanoate + H2O. It participates in amino-acid biosynthesis; L-isoleucine biosynthesis; L-isoleucine from 2-oxobutanoate: step 3/4. The protein operates within amino-acid biosynthesis; L-valine biosynthesis; L-valine from pyruvate: step 3/4. In terms of biological role, functions in the biosynthesis of branched-chain amino acids. Catalyzes the dehydration of (2R,3R)-2,3-dihydroxy-3-methylpentanoate (2,3-dihydroxy-3-methylvalerate) into 2-oxo-3-methylpentanoate (2-oxo-3-methylvalerate) and of (2R)-2,3-dihydroxy-3-methylbutanoate (2,3-dihydroxyisovalerate) into 2-oxo-3-methylbutanoate (2-oxoisovalerate), the penultimate precursor to L-isoleucine and L-valine, respectively. The protein is Dihydroxy-acid dehydratase of Campylobacter curvus (strain 525.92).